Here is a 316-residue protein sequence, read N- to C-terminus: Acetaldehyde dehydrogenase (316 aa).

Residue Ser11 to Ile14 participates in NAD(+) binding. Cys131 serves as the catalytic Acyl-thioester intermediate. NAD(+)-binding positions include Ser162 to Asn170 and Asn289.

The protein belongs to the acetaldehyde dehydrogenase family. In terms of assembly, interacts with MhpE.

The catalysed reaction is acetaldehyde + NAD(+) + CoA = acetyl-CoA + NADH + H(+). Its pathway is aromatic compound metabolism; 3-phenylpropanoate degradation. In terms of biological role, catalyzes the conversion of acetaldehyde to acetyl-CoA, using NAD(+) and coenzyme A. Is the final enzyme in the meta-cleavage pathway for the degradation of aromatic compounds. The sequence is that of Acetaldehyde dehydrogenase from Klebsiella pneumoniae subsp. pneumoniae (strain ATCC 700721 / MGH 78578).